Reading from the N-terminus, the 644-residue chain is Macrolide export ATP-binding/permease protein MacB (644 aa).

Residues isoleucine 4–alanine 242 enclose the ABC transporter domain. Residue glycine 40–serine 47 coordinates ATP. The next 4 helical transmembrane spans lie at leucine 270 to glycine 290, isoleucine 524 to valine 544, leucine 574 to phenylalanine 594, and alanine 607 to methionine 627.

Belongs to the ABC transporter superfamily. Macrolide exporter (TC 3.A.1.122) family. As to quaternary structure, homodimer.

It localises to the cell inner membrane. Its function is as follows. Non-canonical ABC transporter that contains transmembrane domains (TMD), which form a pore in the inner membrane, and an ATP-binding domain (NBD), which is responsible for energy generation. Confers resistance against macrolides. This is Macrolide export ATP-binding/permease protein MacB from Neisseria meningitidis serogroup B (strain ATCC BAA-335 / MC58).